We begin with the raw amino-acid sequence, 751 residues long: Pyridoxal-dependent decarboxylase domain-containing protein 1 (751 aa).

The interval 659 to 751 (QMRKEDSPDS…QEAESVETIR (93 aa)) is disordered. Positions 690–702 (DSISETSSVSQLE) are enriched in polar residues. Residues 720–729 (PQERPAHILE) are compositionally biased toward basic and acidic residues. Positions 742 to 751 (QEAESVETIR) are enriched in acidic residues.

This sequence belongs to the group II decarboxylase family. It depends on pyridoxal 5'-phosphate as a cofactor.

This is Pyridoxal-dependent decarboxylase domain-containing protein 1 (pdxdc1) from Danio rerio (Zebrafish).